Reading from the N-terminus, the 23-residue chain is Potassium channel toxin alpha-KTx 13.1 (23 aa).

Cystine bridges form between Cys2–Cys15, Cys5–Cys20, and Cys9–Cys22. The segment at 13 to 20 (GKCINGRC) is interaction with Ca(2+)-activated K(+) channels.

Expressed by the venom gland.

It is found in the secreted. Its function is as follows. Blocks reversibly Shaker B potassium channels. Also displaces binding of noxiustoxin to mouse brain synaptosome membranes. The chain is Potassium channel toxin alpha-KTx 13.1 from Tityus obscurus (Amazonian scorpion).